The primary structure comprises 110 residues: Large ribosomal subunit protein uL22 (110 aa).

Belongs to the universal ribosomal protein uL22 family. Part of the 50S ribosomal subunit.

This protein binds specifically to 23S rRNA; its binding is stimulated by other ribosomal proteins, e.g. L4, L17, and L20. It is important during the early stages of 50S assembly. It makes multiple contacts with different domains of the 23S rRNA in the assembled 50S subunit and ribosome. Functionally, the globular domain of the protein is located near the polypeptide exit tunnel on the outside of the subunit, while an extended beta-hairpin is found that lines the wall of the exit tunnel in the center of the 70S ribosome. The chain is Large ribosomal subunit protein uL22 from Pseudoalteromonas atlantica (strain T6c / ATCC BAA-1087).